Consider the following 316-residue polypeptide: Initiation factor TFIIB homolog (316 aa).

It belongs to the asfivirus C315R family.

Putative initation factor. This chain is Initiation factor TFIIB homolog, found in Ornithodoros (relapsing fever ticks).